We begin with the raw amino-acid sequence, 83 residues long: Putative beta-neurotoxin RjAa15f (83 aa).

A signal peptide spans 1–18 (MKILIFIIASFMLIGVEC). Residues 19–82 (KEGYPMGRNG…VWDSSNNKCV (64 aa)) enclose the LCN-type CS-alpha/beta domain. 4 cysteine pairs are disulfide-bonded: cysteine 29-cysteine 81, cysteine 33-cysteine 55, cysteine 40-cysteine 62, and cysteine 44-cysteine 64.

This sequence belongs to the long (4 C-C) scorpion toxin superfamily. Sodium channel inhibitor family. Beta subfamily. As to expression, expressed by the venom gland.

Its subcellular location is the secreted. Its function is as follows. Beta toxins bind voltage-independently at site-4 of sodium channels (Nav) and shift the voltage of activation toward more negative potentials thereby affecting sodium channel activation and promoting spontaneous and repetitive firing. The polypeptide is Putative beta-neurotoxin RjAa15f (Rhopalurus junceus (Caribbean blue scorpion)).